Here is a 204-residue protein sequence, read N- to C-terminus: Guanylate kinase (204 aa).

Residues 18–196 enclose the Guanylate kinase-like domain; sequence PKLFTISAPA…SYEVLKSIFI (179 aa). 25–32 lines the ATP pocket; that stretch reads APAGAGKT.

This sequence belongs to the guanylate kinase family.

Its subcellular location is the cytoplasm. It carries out the reaction GMP + ATP = GDP + ADP. In terms of biological role, essential for recycling GMP and indirectly, cGMP. The chain is Guanylate kinase from Chlamydia abortus (strain DSM 27085 / S26/3) (Chlamydophila abortus).